Here is a 706-residue protein sequence, read N- to C-terminus: Polyribonucleotide nucleotidyltransferase (706 aa).

The Mg(2+) site is built by Asp483 and Asp489. The region spanning 550 to 609 (PRITTIWVKTDKIRDVIGTGGKNIRNITETTGVTVDIEDTGRINIASTSKEACDLAIQMI) is the KH domain. The S1 motif domain occupies 619 to 687 (GKLYMGIVKK…KNGKVKLSRK (69 aa)).

Belongs to the polyribonucleotide nucleotidyltransferase family. Mg(2+) is required as a cofactor.

It is found in the cytoplasm. It catalyses the reaction RNA(n+1) + phosphate = RNA(n) + a ribonucleoside 5'-diphosphate. Involved in mRNA degradation. Catalyzes the phosphorolysis of single-stranded polyribonucleotides processively in the 3'- to 5'-direction. This is Polyribonucleotide nucleotidyltransferase from Pelobacter propionicus (strain DSM 2379 / NBRC 103807 / OttBd1).